Consider the following 532-residue polypeptide: Glycerophosphocholine permease GIT4 (532 aa).

6 consecutive transmembrane segments (helical) span residues 55 to 75 (LWPAFASGAGLFSDGYVNAGI), 98 to 118 (NIGSIGFVGTVVGQLSFGYIS), 126 to 146 (GMLTANVMLIFFTLMCAVASW), 150 to 170 (VQGFFACLTVWRFFLGIAIGA), 201 to 221 (AMIDFGFVVSSFVPLVLLWIF), and 229 to 249 (VWRLSIGLGVIPPLILFFIRL). The N-linked (GlcNAc...) asparagine glycan is linked to N266. A helical membrane pass occupies residues 272 to 292 (WWLIIKFYWFRLTVVSLIWFI). The N-linked (GlcNAc...) asparagine glycan is linked to N314. 3 consecutive transmembrane segments (helical) span residues 321-341 (WGWSVVFNLFYMPGAFLGAFI), 349-369 (LTLAIGVGAQGIIGIAMSACL), and 375-395 (HVAGFVVVFGIFSTFGEFGPG). N-linked (GlcNAc...) asparagine glycosylation is present at N396. 2 helical membrane passes run 416–436 (GIAAAIGKIGAFVGTWVFPAI) and 450–470 (VPFYVSSALCLFSAFLTIFFV).

Belongs to the major facilitator superfamily. Sugar transporter (TC 2.A.1.1) family.

The protein localises to the cell membrane. It catalyses the reaction sn-glycerol 3-phosphocholine(out) = sn-glycerol 3-phosphocholine(in). Its function is as follows. Glycerophosphodiester transporter that mediates uptake of glycerophosphocholine (GroPCho) with GIT3. Does not possess detectable glycerophosphoinositol (GroPIns) transport activity. The expanded ability to utilize GroPIns and GroPCho results from the organism's pathogenic nature and its need to occupy a variety of environments within its host organism. This possibility is buttressed by the fact that GroPIns and GroPCho are present and abundant in human fluids. This chain is Glycerophosphocholine permease GIT4, found in Candida albicans (strain SC5314 / ATCC MYA-2876) (Yeast).